The sequence spans 484 residues: Adenylosuccinate lyase (484 aa).

At A2 the chain carries N-acetylalanine. Substrate is bound by residues 20–21 (RY), 85–87 (RHD), and 111–112 (TS). K147 is subject to N6-acetyllysine. The active-site Proton donor/acceptor is the H159. Q241 contacts substrate. The active-site Proton donor/acceptor is S289. N6-acetyllysine is present on K295. Substrate is bound by residues R303, R329, S334, and R338. Residue K415 forms a Glycyl lysine isopeptide (Lys-Gly) (interchain with G-Cter in SUMO1) linkage.

This sequence belongs to the lyase 1 family. Adenylosuccinate lyase subfamily. As to quaternary structure, homotetramer. Residues from neighboring subunits contribute catalytic and substrate-binding residues to each active site. As to expression, ubiquitously expressed. Both isoforms are produced by all tissues. Isoform 2 is 10-fold less abundant than isoform 1.

It catalyses the reaction N(6)-(1,2-dicarboxyethyl)-AMP = fumarate + AMP. The catalysed reaction is (2S)-2-[5-amino-1-(5-phospho-beta-D-ribosyl)imidazole-4-carboxamido]succinate = 5-amino-1-(5-phospho-beta-D-ribosyl)imidazole-4-carboxamide + fumarate. The protein operates within purine metabolism; AMP biosynthesis via de novo pathway; AMP from IMP: step 2/2. Its pathway is purine metabolism; IMP biosynthesis via de novo pathway; 5-amino-1-(5-phospho-D-ribosyl)imidazole-4-carboxamide from 5-amino-1-(5-phospho-D-ribosyl)imidazole-4-carboxylate: step 2/2. With respect to regulation, the enzyme reaction kinetics indicate cooperativity between subunits. Catalyzes two non-sequential steps in de novo AMP synthesis: converts (S)-2-(5-amino-1-(5-phospho-D-ribosyl)imidazole-4-carboxamido)succinate (SAICAR) to fumarate plus 5-amino-1-(5-phospho-D-ribosyl)imidazole-4-carboxamide, and thereby also contributes to de novo IMP synthesis, and converts succinyladenosine monophosphate (SAMP) to AMP and fumarate. The protein is Adenylosuccinate lyase (ADSL) of Homo sapiens (Human).